Here is a 275-residue protein sequence, read N- to C-terminus: Formamidopyrimidine-DNA glycosylase (275 aa).

The active-site Schiff-base intermediate with DNA is the P2. E3 acts as the Proton donor in catalysis. The active-site Proton donor; for beta-elimination activity is the K58. Residues H91, R109, and R154 each coordinate DNA. Residues 240-274 (AVYERAGLPCRVCGTPIRRLVQGQRATYFCPSCQK) form an FPG-type zinc finger. Catalysis depends on R264, which acts as the Proton donor; for delta-elimination activity.

Belongs to the FPG family. As to quaternary structure, monomer. Requires Zn(2+) as cofactor.

The catalysed reaction is Hydrolysis of DNA containing ring-opened 7-methylguanine residues, releasing 2,6-diamino-4-hydroxy-5-(N-methyl)formamidopyrimidine.. The enzyme catalyses 2'-deoxyribonucleotide-(2'-deoxyribose 5'-phosphate)-2'-deoxyribonucleotide-DNA = a 3'-end 2'-deoxyribonucleotide-(2,3-dehydro-2,3-deoxyribose 5'-phosphate)-DNA + a 5'-end 5'-phospho-2'-deoxyribonucleoside-DNA + H(+). Involved in base excision repair of DNA damaged by oxidation or by mutagenic agents. Acts as a DNA glycosylase that recognizes and removes damaged bases. Has a preference for oxidized purines, such as 7,8-dihydro-8-oxoguanine (8-oxoG). Has AP (apurinic/apyrimidinic) lyase activity and introduces nicks in the DNA strand. Cleaves the DNA backbone by beta-delta elimination to generate a single-strand break at the site of the removed base with both 3'- and 5'-phosphates. The protein is Formamidopyrimidine-DNA glycosylase of Bordetella pertussis (strain Tohama I / ATCC BAA-589 / NCTC 13251).